A 154-amino-acid polypeptide reads, in one-letter code: Myoglobin (154 aa).

One can recognise a Globin domain in the interval 2 to 148 (GLSDGEWQLV…FRNEMAAQYK (147 aa)). Residue Ser4 is modified to Phosphoserine. His65 serves as a coordination point for nitrite. O2 is bound at residue His65. Thr68 carries the post-translational modification Phosphothreonine. His94 contacts heme b.

As to quaternary structure, monomeric.

It localises to the cytoplasm. The protein localises to the sarcoplasm. It catalyses the reaction Fe(III)-heme b-[protein] + nitric oxide + H2O = Fe(II)-heme b-[protein] + nitrite + 2 H(+). It carries out the reaction H2O2 + AH2 = A + 2 H2O. In terms of biological role, monomeric heme protein which primary function is to store oxygen and facilitate its diffusion within muscle tissues. Reversibly binds oxygen through a pentacoordinated heme iron and enables its timely and efficient release as needed during periods of heightened demand. Depending on the oxidative conditions of tissues and cells, and in addition to its ability to bind oxygen, it also has a nitrite reductase activity whereby it regulates the production of bioactive nitric oxide. Under stress conditions, like hypoxia and anoxia, it also protects cells against reactive oxygen species thanks to its pseudoperoxidase activity. The sequence is that of Myoglobin from Bubalus bubalis (Domestic water buffalo).